The sequence spans 504 residues: Glutamate--tRNA ligase (504 aa).

A 'HIGH' region motif is present at residues 10-20 (PSPTGDPHVGT). A 'KMSKS' region motif is present at residues 251–255 (KLSKR). Lys254 serves as a coordination point for ATP.

It belongs to the class-I aminoacyl-tRNA synthetase family. Glutamate--tRNA ligase type 1 subfamily. Monomer.

It is found in the cytoplasm. The enzyme catalyses tRNA(Glu) + L-glutamate + ATP = L-glutamyl-tRNA(Glu) + AMP + diphosphate. Its function is as follows. Catalyzes the attachment of glutamate to tRNA(Glu) in a two-step reaction: glutamate is first activated by ATP to form Glu-AMP and then transferred to the acceptor end of tRNA(Glu). This is Glutamate--tRNA ligase from Cellvibrio japonicus (strain Ueda107) (Pseudomonas fluorescens subsp. cellulosa).